A 166-amino-acid chain; its full sequence is Ribonuclease H (166 aa).

An RNase H type-1 domain is found at 5–147 (PRKRVALFTD…VDREARRQAQ (143 aa)). Mg(2+)-binding residues include Asp-14, Glu-52, Asp-74, and Asp-139. Residues 128–166 (GHTGHPENERVDREARRQAQSQAKTPCPPQAPTLFHEEA) form a disordered region. Over residues 131–144 (GHPENERVDREARR) the composition is skewed to basic and acidic residues.

The protein belongs to the RNase H family. In terms of assembly, monomer. The cofactor is Mg(2+).

It is found in the cytoplasm. The catalysed reaction is Endonucleolytic cleavage to 5'-phosphomonoester.. Its function is as follows. Endonuclease that specifically degrades the RNA of RNA-DNA hybrids. This Thermus thermophilus (strain ATCC BAA-163 / DSM 7039 / HB27) protein is Ribonuclease H.